The primary structure comprises 396 residues: Tyrosine--tRNA ligase (396 aa).

Positions 42–51 match the 'HIGH' region motif; that stretch reads PTAPDIHLGH. A 'KMSKS' region motif is present at residues 226 to 230; that stretch reads KMSKS. K229 contacts ATP. Residues 334 to 395 enclose the S4 RNA-binding domain; sequence LPIANLLKEA…GKRKFAKIII (62 aa).

It belongs to the class-I aminoacyl-tRNA synthetase family. TyrS type 2 subfamily. As to quaternary structure, homodimer.

Its subcellular location is the cytoplasm. It carries out the reaction tRNA(Tyr) + L-tyrosine + ATP = L-tyrosyl-tRNA(Tyr) + AMP + diphosphate + H(+). Functionally, catalyzes the attachment of tyrosine to tRNA(Tyr) in a two-step reaction: tyrosine is first activated by ATP to form Tyr-AMP and then transferred to the acceptor end of tRNA(Tyr). This Francisella tularensis subsp. tularensis (strain SCHU S4 / Schu 4) protein is Tyrosine--tRNA ligase.